We begin with the raw amino-acid sequence, 362 residues long: Phosphoserine aminotransferase (362 aa).

Residue Arg-42 coordinates L-glutamate. Pyridoxal 5'-phosphate-binding positions include 76–77, Trp-102, Thr-152, Asp-173, and Gln-196; that span reads AS. An N6-(pyridoxal phosphate)lysine modification is found at Lys-197. Pyridoxal 5'-phosphate is bound at residue 238–239; that stretch reads NT.

The protein belongs to the class-V pyridoxal-phosphate-dependent aminotransferase family. SerC subfamily. As to quaternary structure, homodimer. It depends on pyridoxal 5'-phosphate as a cofactor.

Its subcellular location is the cytoplasm. The enzyme catalyses O-phospho-L-serine + 2-oxoglutarate = 3-phosphooxypyruvate + L-glutamate. The catalysed reaction is 4-(phosphooxy)-L-threonine + 2-oxoglutarate = (R)-3-hydroxy-2-oxo-4-phosphooxybutanoate + L-glutamate. It participates in amino-acid biosynthesis; L-serine biosynthesis; L-serine from 3-phospho-D-glycerate: step 2/3. It functions in the pathway cofactor biosynthesis; pyridoxine 5'-phosphate biosynthesis; pyridoxine 5'-phosphate from D-erythrose 4-phosphate: step 3/5. In terms of biological role, catalyzes the reversible conversion of 3-phosphohydroxypyruvate to phosphoserine and of 3-hydroxy-2-oxo-4-phosphonooxybutanoate to phosphohydroxythreonine. This chain is Phosphoserine aminotransferase, found in Chromobacterium violaceum (strain ATCC 12472 / DSM 30191 / JCM 1249 / CCUG 213 / NBRC 12614 / NCIMB 9131 / NCTC 9757 / MK).